The sequence spans 874 residues: MSTPTFSVADIRKTFLDFFAAKGHTVVASSPLVPGNDPTLMFTNSGMVQFKDVFLGTDKRPYVRATSVQTCLRAGGKHNDLENVGYTARHHTFFEMLGNWSFGDYFKRESLKWAWELLTEVYKLPPERLLATVYAEDDEAYDIWTKEIGLPPERVIRIGDNKGGRYKSDNFWMMADTGPCGPCSEIFYDHGEHIAGGPPGSPDEDGDRFIEIWNNVFMQFDMDEQGNVKPLPAPCVDTGMGLERLAAILQHVHSNYEIDLFDALIKAAARETGTSDLTNPSLKVIADHIRATAFLVADGVIPSNEGRGYVQRRIVRRAIRHGYKLGRKTPFFHKLVQDLVQQMGDAYPKIREQQARITDVLRVEEERFFETLAHGMEILDSALAGGAKTLPGDVAFKLHDTYGFPLDLTNDVCRERGVNVDEAGFATAMEHQKSTARAAGKFKMDRALEYTGAANQFTGYEQLAESAKIVALYVDGTSTAALHAGQSGVVVLDRTPFYAESGGQVGDQGTIGAGSACFTVADTQKIKADVYGHHGTLEAGTLNVGDTVQAQVDLQLRAATMRNHSVTHLMHKALREVLGDHVQQKGSLVNAERTRFDFAHNAPLTAAQIREIERLVNAEVLANTDTNARLMDIESAQKTGAMMLFGEKYGETVRVLDIGTSRELCGGTHVRRTGDIGLFKVVAEGGVAAGVRRIEAVTGENALAYLQSLESTVDQAAAALKAPPAELTARIGGALDQIKTLEKELAALKGKLASSQGDELAGQAVDVKGIKVLAARLEGADAKTLRETMDKLKDKLKTAAIVLAAVDGDKVQLAAGVTADSIGRVKAGDLVNFVAAQVGGKGGGKPDMAMAGGTNAAALPQALAAVQGWVGERI.

4 residues coordinate Zn(2+): histidine 564, histidine 568, cysteine 665, and histidine 669.

This sequence belongs to the class-II aminoacyl-tRNA synthetase family. Zn(2+) serves as cofactor.

The protein localises to the cytoplasm. The enzyme catalyses tRNA(Ala) + L-alanine + ATP = L-alanyl-tRNA(Ala) + AMP + diphosphate. Catalyzes the attachment of alanine to tRNA(Ala) in a two-step reaction: alanine is first activated by ATP to form Ala-AMP and then transferred to the acceptor end of tRNA(Ala). Also edits incorrectly charged Ser-tRNA(Ala) and Gly-tRNA(Ala) via its editing domain. This is Alanine--tRNA ligase from Acidovorax sp. (strain JS42).